The chain runs to 211 residues: Large ribosomal subunit protein uL3 (211 aa).

Position 150 is an N5-methylglutamine (Gln-150).

Belongs to the universal ribosomal protein uL3 family. In terms of assembly, part of the 50S ribosomal subunit. Forms a cluster with proteins L14 and L19. Post-translationally, methylated by PrmB.

Functionally, one of the primary rRNA binding proteins, it binds directly near the 3'-end of the 23S rRNA, where it nucleates assembly of the 50S subunit. This is Large ribosomal subunit protein uL3 from Stutzerimonas stutzeri (strain A1501) (Pseudomonas stutzeri).